The chain runs to 550 residues: Major fimbrium tip subunit FimE (550 aa).

The signal sequence occupies residues 1-21 (MKSKSIIAQLLYVLIAFMAVS). A lipid anchor (N-palmitoyl cysteine) is attached at Cys-22. The S-diacylglycerol cysteine moiety is linked to residue Cys-22. Residues 22-51 (CVADKSEPCPSGEPTRVSGSIVSLEHHGLR) constitute a propeptide that is removed on maturation.

It belongs to the FimE family. In terms of assembly, fimbriae are composed of a major, structural subunit and the minor components FimC, FimD and FimE. Identified in a complex composed of FimC, FimD and FimE (in vitro). Does not directly interact with host proteins, but only as a complex with FimC and FimD.

It localises to the fimbrium. The protein localises to the cell outer membrane. Functionally, probably a component of the fimbrium tip; required for incorporation of FimC and FimD into fimbriae. These long, filamentous pili are attached to the cell surface; they mediate biofilm formation, adhesion onto host cells and onto other bacteria that are part of the oral microbiome. They play an important role in invasion of periodontal tissues and are major virulence factors. FimC, FimD and FimE contribute to interaction with host CXCR4 and thereby down-regulate the TLR2-mediated host immune response. In Porphyromonas gingivalis (strain ATCC 33277 / DSM 20709 / CIP 103683 / JCM 12257 / NCTC 11834 / 2561), this protein is Major fimbrium tip subunit FimE.